We begin with the raw amino-acid sequence, 385 residues long: MSDIEKEENKDSSPPTTPPTGGPTKNNDIDDDEKENKIERSLTENLNKRFYNNNNNNSNNSNGEEIEDIDYKNFKTIKEFGYYYNDKGELRSIEGEEKFKFINQQQYDRLGDIIVKTIQNKMKSEPINLEEHWIPKGETNQCNIFTSKDFFENPTKLMVFINGSGAVKSGQWARSLCINDTLNTGSILPYLNDAISNDFSIIVLNPNYNVFEERIIEEGEEQKEKAKEEEEKKDDNGKLLKKKRVDNSIKGSENSNNHILTVYDEFIKKSPAKEIVIVAHSFGGVNTTYLLDNRGEEIADRLKSIAFTDSVHSLSPKSSSFTKSFFADENKTKNWVKSDKKLNTDLGFSKLQGCNIASSGHRVHEFTSSACRVPLFQFILNSLKK.

2 disordered regions span residues 1-65 (MSDI…NGEE) and 220-239 (EEQK…NGKL). Residues 52 to 62 (NNNNNNSNNSN) show a composition bias toward low complexity. Residues 220-238 (EEQKEKAKEEEEKKDDNGK) are compositionally biased toward basic and acidic residues.

It belongs to the ARB2A family.

This chain is Cotranscriptional regulator ARB2A homolog, found in Dictyostelium discoideum (Social amoeba).